The sequence spans 346 residues: Ephrin-B1 (346 aa).

The first 27 residues, 1-27 (MARPGQRWLGKWLVAMVVWALCRLATP), serve as a signal peptide directing secretion. At 28–237 (LAKNLEPVSW…GDPDGFFNSK (210 aa)) the chain is on the extracellular side. Residues 30–164 (KNLEPVSWSS…TRTMKIIMKV (135 aa)) form the Ephrin RBD domain. 2 cysteine pairs are disulfide-bonded: Cys-64–Cys-101 and Cys-89–Cys-153. The N-linked (GlcNAc...) asparagine glycan is linked to Asn-139. The tract at residues 169 to 228 (NAVTPEQLTTSRPSKEADNTVKMATQAPGSRGSLGDSDGKHETVNQEEKSGPGASGGSSG) is disordered. The span at 205 to 218 (SDGKHETVNQEEKS) shows a compositional bias: basic and acidic residues. Residues 238-258 (VALFAAVGAGCVIFLLIIIFL) traverse the membrane as a helical segment. Topologically, residues 259–346 (TVLLLKLRKR…QSPANIYYKV (88 aa)) are cytoplasmic. The short motif at 260–273 (VLLLKLRKRHRKHT) is the Nuclear localization signal element. An interaction with ZHX2 region spans residues 263-294 (LKLRKRHRKHTQQRAAALSLSTLASPKGGSGT). A phosphoserine mark is found at Ser-281 and Ser-287. Positions 344–346 (YKV) match the PDZ-binding motif.

Belongs to the ephrin family. Interacts (via PDZ-binding motif) with GRIP1 and GRIP2 (via PDZ domain 6). Interacts with TLE1. The intracellular domain peptide interacts with ZHX2; the interaction enhances ZHX2 transcriptional repression activity. Post-translationally, inducible phosphorylation of tyrosine residues in the cytoplasmic domain. Proteolytically processed. The ectodomain is cleaved, probably by a metalloprotease, to produce a membrane-tethered C-terminal fragment. This fragment is then further processed by the gamma-secretase complex to yield a soluble intracellular domain peptide which can translocate to the nucleus. The intracellular domain peptide is highly labile suggesting that it is targeted for degradation by the proteasome. Widely expressed. Detected in both neuronal and non-neuronal tissues. Seems to have particularly strong expression in retina, sciatic nerve, heart and spinal cord.

The protein resides in the cell membrane. Its subcellular location is the membrane raft. It is found in the nucleus. Cell surface transmembrane ligand for Eph receptors, a family of receptor tyrosine kinases which are crucial for migration, repulsion and adhesion during neuronal, vascular and epithelial development. Binding to Eph receptors residing on adjacent cells leads to contact-dependent bidirectional signaling into neighboring cells. Shows high affinity for the receptor tyrosine kinase EPHB1/ELK. Can also bind EPHB2 and EPHB3. Binds to, and induces collapse of, commissural axons/growth cones in vitro. May play a role in constraining the orientation of longitudinally projecting axons. This Homo sapiens (Human) protein is Ephrin-B1 (EFNB1).